The primary structure comprises 215 residues: Phosphatidylserine decarboxylase proenzyme (215 aa).

Residue Ser-186 is the Schiff-base intermediate with substrate; via pyruvic acid of the active site. A Pyruvic acid (Ser); by autocatalysis modification is found at Ser-186.

Belongs to the phosphatidylserine decarboxylase family. PSD-A subfamily. Heterodimer of a large membrane-associated beta subunit and a small pyruvoyl-containing alpha subunit. Requires pyruvate as cofactor. Is synthesized initially as an inactive proenzyme. Formation of the active enzyme involves a self-maturation process in which the active site pyruvoyl group is generated from an internal serine residue via an autocatalytic post-translational modification. Two non-identical subunits are generated from the proenzyme in this reaction, and the pyruvate is formed at the N-terminus of the alpha chain, which is derived from the carboxyl end of the proenzyme. The post-translation cleavage follows an unusual pathway, termed non-hydrolytic serinolysis, in which the side chain hydroxyl group of the serine supplies its oxygen atom to form the C-terminus of the beta chain, while the remainder of the serine residue undergoes an oxidative deamination to produce ammonia and the pyruvoyl prosthetic group on the alpha chain.

The protein resides in the cell membrane. It carries out the reaction a 1,2-diacyl-sn-glycero-3-phospho-L-serine + H(+) = a 1,2-diacyl-sn-glycero-3-phosphoethanolamine + CO2. Its pathway is phospholipid metabolism; phosphatidylethanolamine biosynthesis; phosphatidylethanolamine from CDP-diacylglycerol: step 2/2. Its function is as follows. Catalyzes the formation of phosphatidylethanolamine (PtdEtn) from phosphatidylserine (PtdSer). This chain is Phosphatidylserine decarboxylase proenzyme, found in Pelagibacter ubique (strain HTCC1062).